Consider the following 682-residue polypeptide: E3 ubiquitin ligase Rnf157 (682 aa).

A lipid anchor (N-myristoyl glycine) is attached at Gly-2. The segment at 277–317 (CVVCLSDVRDTLILPCRHCASCNVHCADTLRYQANNCPICR) adopts an RING-type; degenerate zinc-finger fold. The D-box 1 signature appears at 330-333 (RKKL). Disordered regions lie at residues 440 to 604 (QNSS…VQED) and 655 to 682 (NTQR…PLAV). Polar residues predominate over residues 479–538 (ESENLTLSSSGAVDQSSCTGTPLSSTISSPEDPASSSLAQSVMSMASSQISTDTVSSMSG). Residues 585-597 (QDAEGNDIMEEED) are compositionally biased toward acidic residues. Positions 658–661 (RRRL) match the D-box 2 motif. 3 positions are modified to phosphoserine: Ser-662, Ser-664, and Ser-665.

In terms of assembly, interacts with APBB1. Interacts with CHD1; CHD1-binding controls RNF157 stability. Also interacts with ATRN, MEGF8, TECR, MSI2, PLRG1, BYSL, MTERF3, PSMA1, MRPS18B, PRPF4, FASTKD2, SLC25A1, SMU1, CNOT9, MRPS2, MAGT1, FXR2, EMD, PSMD8, HDAC1, RAN, HSD17B12, TXNDC5 and MRPL19. In terms of tissue distribution, predominantly expressed in the brain.

The protein localises to the cytoplasm. The enzyme catalyses S-ubiquitinyl-[E2 ubiquitin-conjugating enzyme]-L-cysteine + [acceptor protein]-L-lysine = [E2 ubiquitin-conjugating enzyme]-L-cysteine + N(6)-ubiquitinyl-[acceptor protein]-L-lysine.. In terms of biological role, E3 ubiquitin ligase that ubiquitinates APBB1 for its degradation by the proteasome and thus prevents apoptosis and promotes survival of neurons. Has a dual role in neurons as it is also required for dendrite growth and maintenance for which its ligase activity is not critical. May act as a scaffold molecule to regulate this process. Acts as a downstream effector of the interconnected PI3K and MAPK signaling pathways and thus participates in the regulation of the cell cycle. This chain is E3 ubiquitin ligase Rnf157 (Rnf157), found in Rattus norvegicus (Rat).